Here is a 287-residue protein sequence, read N- to C-terminus: Festuclavine synthase I (287 aa).

The protein belongs to the fgaFS/easG family.

It catalyses the reaction festuclavine + NAD(+) = 6,8-dimethyl-6,7-didehydroergoline + NADH + H(+). Its pathway is alkaloid biosynthesis; ergot alkaloid biosynthesis. Festuclavine synthase; part of the gene cluster that mediates the biosynthesis of isofumigaclavines, fungal ergot alkaloids. The tryptophan dimethylallyltransferase ifgA catalyzes the first step of ergot alkaloid biosynthesis by condensing dimethylallyl diphosphate (DMAP) and tryptophan to form 4-dimethylallyl-L-tryptophan. The second step is catalyzed by the methyltransferase ifgB that methylates 4-dimethylallyl-L-tryptophan in the presence of S-adenosyl-L-methionine, resulting in the formation of N-methyl-dimethylallyl-L-tryptophan. The catalase ifgD and the FAD-dependent oxidoreductase ifgC then transform N-methyl-dimethylallyl-L-tryptophan to chanoclavine-I which is further oxidized by ifgE in the presence of NAD(+), resulting in the formation of chanoclavine-I aldehyde. The chanoclavine-I aldehyde reductases ifgG and/or fgaOx3 reduce chanoclavine-I aldehyde to dihydrochanoclavine-I aldehyde that spontaneously dehydrates to form 6,8-dimethyl-6,7-didehydroergoline. The festuclavine dehydrogenases ifgF1 and/or ifgF2 then catalyze the reduction of 6,8-dimethyl-6,7-didehydroergoline to form festuclavine. Hydrolysis of festuclavine by a yet undetermined cytochrome P450 monooxygenase (called ifgH) then leads to the formation of isofumigaclavine B which is in turn acetylated by ifgI to isofumigaclavine A. Penicillium roqueforti has interestingly at least two sets of genes for the consumption of chanoclavine-I aldehyde on three different loci, the OYEs ifgG/fgaOx3 and the festuclavine synthase homologs ifgF1/ifgF2. The reason for the duplication of these genes is unclear, probably to ensure the conversion of chanoclavine-I aldehyde by differential gene expression under various environmental conditions. This Penicillium roqueforti (strain FM164) protein is Festuclavine synthase I.